We begin with the raw amino-acid sequence, 145 residues long: Chaperonin GroEL (145 aa).

The protein belongs to the chaperonin (HSP60) family. Forms a cylinder of 14 subunits composed of two heptameric rings stacked back-to-back. Interacts with the co-chaperonin GroES.

It localises to the cytoplasm. The enzyme catalyses ATP + H2O + a folded polypeptide = ADP + phosphate + an unfolded polypeptide.. Its function is as follows. Together with its co-chaperonin GroES, plays an essential role in assisting protein folding. The GroEL-GroES system forms a nano-cage that allows encapsulation of the non-native substrate proteins and provides a physical environment optimized to promote and accelerate protein folding. The sequence is that of Chaperonin GroEL from Thermus thermophilus.